Here is a 439-residue protein sequence, read N- to C-terminus: Argininosuccinate lyase (439 aa).

This sequence belongs to the lyase 1 family. Argininosuccinate lyase subfamily.

The protein resides in the cytoplasm. It catalyses the reaction 2-(N(omega)-L-arginino)succinate = fumarate + L-arginine. The protein operates within amino-acid biosynthesis; L-arginine biosynthesis; L-arginine from L-ornithine and carbamoyl phosphate: step 3/3. This chain is Argininosuccinate lyase, found in Caldanaerobacter subterraneus subsp. tengcongensis (strain DSM 15242 / JCM 11007 / NBRC 100824 / MB4) (Thermoanaerobacter tengcongensis).